The primary structure comprises 95 residues: Small ribosomal subunit protein bS20c (95 aa).

This sequence belongs to the bacterial ribosomal protein bS20 family.

Its subcellular location is the plastid. It localises to the cyanelle. In terms of biological role, binds directly to 16S ribosomal RNA. This is Small ribosomal subunit protein bS20c (rps20) from Cyanophora paradoxa.